Consider the following 438-residue polypeptide: Trigger factor (438 aa).

A PPIase FKBP-type domain is found at 160 to 245; sequence DDKVTIDFVG…VKKIQQAELP (86 aa).

It belongs to the FKBP-type PPIase family. Tig subfamily.

Its subcellular location is the cytoplasm. The enzyme catalyses [protein]-peptidylproline (omega=180) = [protein]-peptidylproline (omega=0). Its function is as follows. Involved in protein export. Acts as a chaperone by maintaining the newly synthesized protein in an open conformation. Functions as a peptidyl-prolyl cis-trans isomerase. This chain is Trigger factor, found in Francisella tularensis subsp. tularensis (strain FSC 198).